The chain runs to 437 residues: Transcription factor E2F2 (437 aa).

The interval Ala65–Pro105 is cyclin A/CDK2 binding. Residues Gly107–Gly196 mediate DNA binding. The leucine-zipper stretch occupies residues Leu155–Leu176. Positions Glu160–Gly196 match the DEF box motif. Residues Met197 to Ile289 are dimerization. The disordered stretch occupies residues Val307–Leu368. The span at Glu315 to Ser330 shows a compositional bias: low complexity. Pro residues predominate over residues Ala351–Leu365. Residues Ala359–Asn437 are transactivation. Positions Asp410–Asp427 are retinoblastoma protein binding.

Belongs to the E2F/DP family. In terms of assembly, component of the DRTF1/E2F transcription factor complex. Forms heterodimers with DP family members. The E2F2 complex binds specifically hypophosphorylated retinoblastoma protein RB1. During the cell cycle, RB1 becomes phosphorylated in mid-to-late G1 phase, detaches from the DRTF1/E2F complex, rendering E2F transcriptionally active. Viral oncoproteins, notably E1A, T-antigen and HPV E7, are capable of sequestering RB1, thus releasing the active complex. Binds EAPP. In terms of processing, phosphorylated by CDK2 and cyclin A-CDK2 in the S-phase. As to expression, highest level of expression is found in placenta, low levels are found in lung. Found as well in many immortalized cell lines derived from tumor samples.

The protein resides in the nucleus. Transcription activator that binds DNA cooperatively with DP proteins through the E2 recognition site, 5'-TTTC[CG]CGC-3' found in the promoter region of a number of genes whose products are involved in cell cycle regulation or in DNA replication. The DRTF1/E2F complex functions in the control of cell-cycle progression from g1 to s phase. E2F2 binds specifically to RB1 in a cell-cycle dependent manner. The sequence is that of Transcription factor E2F2 (E2F2) from Homo sapiens (Human).